Here is a 247-residue protein sequence, read N- to C-terminus: Probable transcriptional regulatory protein Dalk_2958 (247 aa).

This sequence belongs to the TACO1 family.

The protein localises to the cytoplasm. This is Probable transcriptional regulatory protein Dalk_2958 from Desulfatibacillum aliphaticivorans.